We begin with the raw amino-acid sequence, 599 residues long: Thiamine transporter THI72 (599 aa).

Transmembrane regions (helical) follow at residues 42 to 62 (WGFW…GMWI), 78 to 98 (IGAF…NSCP), 112 to 132 (FVFG…MSIV), 174 to 194 (LIGF…KPYH), 197 to 217 (YILI…VIYL), 280 to 300 (IVAL…GASA), 333 to 353 (FFCG…NCGF), 372 to 392 (GAIF…YNSS), 395 to 415 (FLTV…VMIC), 447 to 467 (AIVA…WEVN), and 484 to 504 (SFFS…LFPF). Residues 553–599 (HEYKPESSDDELPELTKTSSENTKVFEIVHQKDNEKESSTSSEKQIA) form a disordered region. A phosphoserine mark is found at S560 and S572. Basic and acidic residues predominate over residues 579-590 (EIVHQKDNEKES).

Belongs to the purine-cytosine permease (2.A.39) family.

It localises to the membrane. Functionally, low affinity thiamine transporter responsible for intake of thiamine. It is possible that the primary function is the uptake of closely related compounds and that thiamine transport is a secondary activity of these proteins. The sequence is that of Thiamine transporter THI72 (THI72) from Saccharomyces cerevisiae (strain ATCC 204508 / S288c) (Baker's yeast).